The sequence spans 353 residues: Divinyl chlorophyll a/b light-harvesting protein PcbG (353 aa).

6 consecutive transmembrane segments (helical) span residues 28–48, 64–84, 90–110, 204–224, 244–264, and 308–328; these read FISS…ANTL, GLVV…NGVF, LLVV…GGML, IMGG…FHIL, FVLS…ALWC, and LTNV…FHGL.

This sequence belongs to the PsbB/PsbC family. IsiA/Pcb subfamily. As to quaternary structure, the antenna complex consists of divinyl chlorophylls (a and b) and divinyl chlorophyll a/b binding proteins and binds more divinyl chlorophyll b than does the antenna complex from high-light-adapted Prochlorococcus. Also forms complexes with PSI, consisting of a PSI trimer with surrounded by a PcbG ring (probably with 18 subunits). Is the only subunit found in this ring under iron-replete conditions. The cofactor is divinyl chlorophyll a. Divinyl chlorophyll b serves as cofactor.

It is found in the cellular thylakoid membrane. Its function is as follows. The antenna complex functions as a light receptor, it captures and delivers excitation energy to photosystems I. The Prochlorales pcb genes are not related to higher plant LHCs. The sequence is that of Divinyl chlorophyll a/b light-harvesting protein PcbG (pcbG) from Prochlorococcus marinus (strain SARG / CCMP1375 / SS120).